Here is a 428-residue protein sequence, read N- to C-terminus: Glutamate-1-semialdehyde 2,1-aminomutase (428 aa).

An N6-(pyridoxal phosphate)lysine modification is found at Lys-267.

The protein belongs to the class-III pyridoxal-phosphate-dependent aminotransferase family. HemL subfamily. In terms of assembly, homodimer. Requires pyridoxal 5'-phosphate as cofactor.

Its subcellular location is the cytoplasm. The enzyme catalyses (S)-4-amino-5-oxopentanoate = 5-aminolevulinate. The protein operates within porphyrin-containing compound metabolism; protoporphyrin-IX biosynthesis; 5-aminolevulinate from L-glutamyl-tRNA(Glu): step 2/2. This is Glutamate-1-semialdehyde 2,1-aminomutase from Desulforapulum autotrophicum (strain ATCC 43914 / DSM 3382 / VKM B-1955 / HRM2) (Desulfobacterium autotrophicum).